The primary structure comprises 595 residues: Probable L-gulonolactone oxidase 1 (595 aa).

Residues 1-18 form the signal peptide; it reads MAFWLSLIFFCFCTFASS. An FAD-binding PCMH-type domain is found at 47–229; that stretch reads SICEAAKVEY…SQVTFQLQPM (183 aa).

Belongs to the oxygen-dependent FAD-linked oxidoreductase family. The cofactor is FAD.

The enzyme catalyses L-gulono-1,4-lactone + O2 = L-ascorbate + H2O2 + H(+). It functions in the pathway cofactor biosynthesis; L-ascorbate biosynthesis. Functionally, may be involved in the biosynthesis of ascorbic acid. The protein is Probable L-gulonolactone oxidase 1 of Arabidopsis thaliana (Mouse-ear cress).